The following is a 102-amino-acid chain: Large ribosomal subunit protein bL21 (102 aa).

It belongs to the bacterial ribosomal protein bL21 family. Part of the 50S ribosomal subunit. Contacts protein L20.

Functionally, this protein binds to 23S rRNA in the presence of protein L20. The sequence is that of Large ribosomal subunit protein bL21 from Geobacter sp. (strain M21).